The sequence spans 24 residues: Ascaphin-4 (24 aa).

Expressed by the skin glands.

Its subcellular location is the secreted. Antimicrobial peptide that shows higher potency against Gram-negative bacteria than against Gram-positive bacteria. Has a very week hemolytic activity. The polypeptide is Ascaphin-4 (Ascaphus truei (Coastal tailed frog)).